The sequence spans 60 residues: Large ribosomal subunit protein bL32 (60 aa).

Positions 1–60 (MAVQQNKKSRSARDMRRSHDALEASTLSVEKSTGEVHLRHHVSPEGVYRGRKVIDKGADE) are disordered. The segment covering 11–22 (SARDMRRSHDAL) has biased composition (basic and acidic residues).

The protein belongs to the bacterial ribosomal protein bL32 family.

The chain is Large ribosomal subunit protein bL32 from Ectopseudomonas mendocina (strain ymp) (Pseudomonas mendocina).